The chain runs to 318 residues: 2-keto-3-deoxygluconate permease (318 aa).

The next 10 membrane-spanning stretches (helical) occupy residues 10–30 (LPGG…TLWP), 42–62 (GLIS…GATI), 82–102 (IAVA…GGVS), 109–129 (LSVL…YAAL), 139–159 (AGAV…LILG), 163–183 (LASF…LGFA), 201–221 (TLVP…TIAH), 224–244 (TSGV…LLLA), 257–277 (VAAS…AGMA), and 289–309 (ALVA…TALY).

The protein belongs to the KdgT transporter family.

The protein resides in the cell inner membrane. The enzyme catalyses 2-dehydro-3-deoxy-D-gluconate(in) + H(+)(in) = 2-dehydro-3-deoxy-D-gluconate(out) + H(+)(out). Its function is as follows. Catalyzes the proton-dependent uptake of 2-keto-3-deoxygluconate (KDG) into the cell. The chain is 2-keto-3-deoxygluconate permease from Xanthomonas axonopodis pv. citri (strain 306).